The primary structure comprises 265 residues: Indole-3-glycerol phosphate synthase (265 aa).

The protein belongs to the TrpC family.

The enzyme catalyses 1-(2-carboxyphenylamino)-1-deoxy-D-ribulose 5-phosphate + H(+) = (1S,2R)-1-C-(indol-3-yl)glycerol 3-phosphate + CO2 + H2O. Its pathway is amino-acid biosynthesis; L-tryptophan biosynthesis; L-tryptophan from chorismate: step 4/5. This chain is Indole-3-glycerol phosphate synthase, found in Chromobacterium violaceum (strain ATCC 12472 / DSM 30191 / JCM 1249 / CCUG 213 / NBRC 12614 / NCIMB 9131 / NCTC 9757 / MK).